Consider the following 490-residue polypeptide: Polyamine transporter RMV1 (490 aa).

Positions 1–21 (MTELSSPNLDSASQKPRISTE) are enriched in polar residues. The interval 1–38 (MTELSSPNLDSASQKPRISTENPPPPPPHISIGVTTGD) is disordered. Helical transmembrane passes span 53-73 (ITVLPLVFLIFYEVSGGPFGI), 83-103 (LLAIVGFIVFPFIWSIPEALI), 116-136 (GYVVWVTLAMGPYWGFQQGWV), 160-180 (IPILGSGIPRVAAILVLTVAL), 188-208 (LSIVGVAAVLLGVFSILPFVV), 231-248 (GVNWSLYLNTLFWNLNYW), 273-293 (LLLVVFSYIFPVLTGTGAIAL), 303-323 (FADIGKVIGGVWLGWWIQAAA), 363-383 (TPWVGILFSASGVIILSWLSF), 386-406 (IVAAENLLYCFGMVLEFITFV), 425-445 (VLGSVLMCIPPTVLIGVIMAF), and 448-468 (LKVALVSLAAIVIGLVLQPCL).

The protein belongs to the amino acid-polyamine-organocation (APC) superfamily. Polyamine:cation symporter (PHS) (TC 2.A.3.12) family.

It is found in the cell membrane. Its function is as follows. Cell membrane polyamine/proton symporter involved in the polyamine uptake in cells. Possesses high affinity for spermine and spermidine and lower affinity for putrescine. Transports paraquat, a polyamine analog, and thus confers sensitivity to this chemical which is used as a herbicide. This chain is Polyamine transporter RMV1 (RMV1), found in Arabidopsis thaliana (Mouse-ear cress).